The sequence spans 438 residues: Hydrogenobyrinate a,c-diamide synthase (438 aa).

The GATase cobBQ-type domain occupies 247–438 (RIALAEDAAF…TFFHAIAKGG (192 aa)). Cysteine 329 (nucleophile) is an active-site residue.

This sequence belongs to the CobB/CbiA family. The cofactor is Mg(2+).

The catalysed reaction is hydrogenobyrinate + 2 L-glutamine + 2 ATP + 2 H2O = hydrogenobyrinate a,c-diamide + 2 L-glutamate + 2 ADP + 2 phosphate + 2 H(+). The protein operates within cofactor biosynthesis; adenosylcobalamin biosynthesis; cob(II)yrinate a,c-diamide from precorrin-2 (aerobic route): step 9/10. Its function is as follows. Catalyzes the ATP-dependent amidation of the two carboxylate groups at positions a and c of hydrogenobyrinate, using either L-glutamine or ammonia as the nitrogen source. The sequence is that of Hydrogenobyrinate a,c-diamide synthase from Agrobacterium fabrum (strain C58 / ATCC 33970) (Agrobacterium tumefaciens (strain C58)).